A 212-amino-acid polypeptide reads, in one-letter code: N-acetyltransferase 9-like protein (212 aa).

The N-acetyltransferase domain occupies 34–201 (EEIREQTASE…INLLNLKNND (168 aa)).

Belongs to the acetyltransferase family. GNAT subfamily.

This chain is N-acetyltransferase 9-like protein (nat9), found in Dictyostelium discoideum (Social amoeba).